Reading from the N-terminus, the 757-residue chain is Centrosomal protein of 68 kDa (757 aa).

Composition is skewed to basic and acidic residues over residues Met-1–Lys-17 and Ala-86–Glu-96. Disordered regions lie at residues Met-1–Ala-47, Trp-67–Ala-158, Gln-192–Ala-259, Pro-311–Asp-480, Pro-509–Pro-551, and Leu-597–Gln-618. Positions Leu-125–Cys-144 are enriched in polar residues. Composition is skewed to low complexity over residues Gln-192–Ser-206 and Val-224–Val-240. A Phosphoserine; by PLK1 modification is found at Ser-332. The span at Phe-339–Pro-355 shows a compositional bias: polar residues. 2 stretches are compositionally biased toward basic and acidic residues: residues Gly-405 to Asp-432 and Arg-439 to Thr-456. The segment covering Ser-457 to Glu-467 has biased composition (polar residues). Residues Ser-472 and Ser-478 each carry the phosphoserine modification. A compositionally biased stretch (low complexity) spans Ser-524 to Ala-543.

Interacts with CNTLN; the interaction recruits CEP68 to the centrosome. Interacts with the SCF(FBXW11) complex which contains SKP1, CUL1 and FBXW11; the interaction is probably mediated by FBXW11 and the complex also contains CDK5RAP2 and PCNT. Also interacts with F-box protein BTRC. Interacts with serine/threonine-protein kinase PLK1; the interaction leads to phosphorylation of CEP68 and its subsequent degradation. Interacts with NEK2; the interaction leads to phosphorylation of CEP68. In terms of processing, phosphorylation by PLK1 is required for binding to BTRC in prometaphase. Phosphorylated directly or indirectly by NEK2. NEK2-mediated phosphorylation promotes CEP68 dissociation from the centrosome and its degradation at the onset of mitosis. Post-translationally, ubiquitinated and targeted for proteasomal degradation in early mitosis by the SCF(BTRC) and/or SCF(FBXW11) E3 ubiquitin-protein ligase complexes. Degradation is complete by prometaphase and is required for removal of CDK5RAP2 from the peripheral pericentriolar material and subsequent centriole separation.

The protein resides in the cytoplasm. The protein localises to the cytoskeleton. It is found in the microtubule organizing center. It localises to the centrosome. Functionally, involved in maintenance of centrosome cohesion, probably as part of a linker structure which prevents centrosome splitting. Required for localization of CDK5RAP2 to the centrosome during interphase. Contributes to CROCC/rootletin filament formation. This Homo sapiens (Human) protein is Centrosomal protein of 68 kDa (CEP68).